The primary structure comprises 212 residues: Urease accessory protein UreG 2 (212 aa).

11–18 (GPVGSGKM) lines the GTP pocket.

This sequence belongs to the SIMIBI class G3E GTPase family. UreG subfamily. In terms of assembly, homodimer. UreD, UreF and UreG form a complex that acts as a GTP-hydrolysis-dependent molecular chaperone, activating the urease apoprotein by helping to assemble the nickel containing metallocenter of UreC. The UreE protein probably delivers the nickel.

The protein localises to the cytoplasm. Functionally, facilitates the functional incorporation of the urease nickel metallocenter. This process requires GTP hydrolysis, probably effectuated by UreG. In terms of biological role, disrupting the ure2 operon has no effect on urease activity, or pathogen survival in BALB/c mice when inoculated by gavage, but confers slightly enhanced resistance to low pH killing in vitro. The polypeptide is Urease accessory protein UreG 2 (Brucella suis biovar 1 (strain 1330)).